A 345-amino-acid polypeptide reads, in one-letter code: Dihydroorotase (345 aa).

Residues histidine 13 and histidine 15 each contribute to the Zn(2+) site. Substrate-binding positions include 15–17 (HLR) and asparagine 41. Residues lysine 100, histidine 137, and histidine 175 each coordinate Zn(2+). Lysine 100 is modified (N6-carboxylysine). Histidine 137 contributes to the substrate binding site. Leucine 220 is a substrate binding site. Aspartate 248 provides a ligand contact to Zn(2+). The active site involves aspartate 248. Residues histidine 252 and alanine 264 each contribute to the substrate site.

The protein belongs to the metallo-dependent hydrolases superfamily. DHOase family. Class II DHOase subfamily. Homodimer. Zn(2+) serves as cofactor.

The enzyme catalyses (S)-dihydroorotate + H2O = N-carbamoyl-L-aspartate + H(+). The protein operates within pyrimidine metabolism; UMP biosynthesis via de novo pathway; (S)-dihydroorotate from bicarbonate: step 3/3. Its function is as follows. Catalyzes the reversible cyclization of carbamoyl aspartate to dihydroorotate. The polypeptide is Dihydroorotase (Laribacter hongkongensis (strain HLHK9)).